The chain runs to 180 residues: Pyruvate synthase subunit PorC (180 aa).

In terms of assembly, heterotetramer of one alpha, one beta, one delta and one gamma chain.

It carries out the reaction 2 oxidized [2Fe-2S]-[ferredoxin] + pyruvate + CoA = 2 reduced [2Fe-2S]-[ferredoxin] + acetyl-CoA + CO2 + H(+). The sequence is that of Pyruvate synthase subunit PorC (porC) from Methanothermobacter thermautotrophicus (strain ATCC 29096 / DSM 1053 / JCM 10044 / NBRC 100330 / Delta H) (Methanobacterium thermoautotrophicum).